Reading from the N-terminus, the 713-residue chain is Methionine--tRNA ligase (713 aa).

The 'HIGH' region motif lies at 31 to 41 (PYANGSIHLGH). Cys-162, Cys-165, Cys-175, and Cys-178 together coordinate Zn(2+). The 'KMSKS' region motif lies at 348-352 (KMSKS). Position 351 (Lys-351) interacts with ATP. One can recognise a tRNA-binding domain in the interval 609–713 (DFAKIDLRIV…DGAKAGMRVK (105 aa)).

It belongs to the class-I aminoacyl-tRNA synthetase family. MetG type 1 subfamily. Homodimer. The cofactor is Zn(2+).

Its subcellular location is the cytoplasm. The catalysed reaction is tRNA(Met) + L-methionine + ATP = L-methionyl-tRNA(Met) + AMP + diphosphate. Functionally, is required not only for elongation of protein synthesis but also for the initiation of all mRNA translation through initiator tRNA(fMet) aminoacylation. This chain is Methionine--tRNA ligase, found in Colwellia psychrerythraea (strain 34H / ATCC BAA-681) (Vibrio psychroerythus).